The sequence spans 141 residues: Hemoglobin subunit alpha-1 (141 aa).

The region spanning 1 to 141 is the Globin domain; sequence VLSAADKGNV…VSTVLTSKYR (141 aa). O2 is bound at residue His58. His87 is a binding site for heme b.

It belongs to the globin family. In terms of assembly, heterotetramer of two alpha chains and two beta chains. In terms of tissue distribution, red blood cells.

Functionally, involved in oxygen transport from the lung to the various peripheral tissues. The chain is Hemoglobin subunit alpha-1 from Bos mutus grunniens (Wild yak).